The following is a 72-amino-acid chain: Small ribosomal subunit protein bS18 (72 aa).

The protein belongs to the bacterial ribosomal protein bS18 family. As to quaternary structure, part of the 30S ribosomal subunit. Forms a tight heterodimer with protein bS6.

Binds as a heterodimer with protein bS6 to the central domain of the 16S rRNA, where it helps stabilize the platform of the 30S subunit. This chain is Small ribosomal subunit protein bS18, found in Aquifex aeolicus (strain VF5).